We begin with the raw amino-acid sequence, 692 residues long: Elongation factor G (692 aa).

Residues 8 to 282 enclose the tr-type G domain; the sequence is EKTRNIGIMA…GVVDYLPSPV (275 aa). GTP-binding positions include 17-24, 81-85, and 135-138; these read AHIDAGKT, DTPGH, and NKMD.

Belongs to the TRAFAC class translation factor GTPase superfamily. Classic translation factor GTPase family. EF-G/EF-2 subfamily.

It is found in the cytoplasm. In terms of biological role, catalyzes the GTP-dependent ribosomal translocation step during translation elongation. During this step, the ribosome changes from the pre-translocational (PRE) to the post-translocational (POST) state as the newly formed A-site-bound peptidyl-tRNA and P-site-bound deacylated tRNA move to the P and E sites, respectively. Catalyzes the coordinated movement of the two tRNA molecules, the mRNA and conformational changes in the ribosome. This is Elongation factor G from Geobacillus kaustophilus (strain HTA426).